Here is a 296-residue protein sequence, read N- to C-terminus: Morphine 6-dehydrogenase (296 aa).

13-22 (GVKMPALGLG) contacts NADP(+). The active-site Proton donor is tyrosine 52. Histidine 110 serves as a coordination point for substrate.

This sequence belongs to the aldo/keto reductase family. Monomer.

It catalyses the reaction morphine + NAD(+) = morphinone + NADH + H(+). It carries out the reaction morphine + NADP(+) = morphinone + NADPH + H(+). It functions in the pathway alkaloid degradation; codeine degradation. It participates in alkaloid degradation; morphine degradation. Oxidizes only the C-6 hydroxy group of morphine and codeine. This Pseudomonas putida (Arthrobacter siderocapsulatus) protein is Morphine 6-dehydrogenase (morA).